We begin with the raw amino-acid sequence, 667 residues long: E3 ubiquitin-protein ligase Midline-1 (667 aa).

The segment at 10–60 (CPICLELFEDPLLLPCAHSLCFNCAHRILVSHCATNESVESITAFQCPTCR) adopts an RING-type zinc-finger fold. Residues Ser-92 and Ser-96 each carry the phosphoserine modification. 2 consecutive B box-type zinc fingers follow at residues 116–165 (KVLC…IEPI) and 172–212 (GLMC…VAAL). Residues Cys-119, Cys-122, Cys-134, Cys-137, Cys-142, Cys-145, His-150, His-159, Cys-175, His-178, Cys-198, and His-204 each contribute to the Zn(2+) site. The stretch at 205 to 264 (RDHQVAALSERYDKLKQNLESNLTNLIKRNTELETLLAKLIQTCQHVEVNASRQEAKLTE) forms a coiled coil. The region spanning 320–379 (LKENDHARFLQTAKNITERVSMATASSQVLIPEINLNDTFDTFALDFSREKKLLECLDYL) is the COS domain. One can recognise a Fibronectin type-III domain in the interval 381–484 (APNPPTIREE…EPGKLKTNSQ (104 aa)). A compositionally biased stretch (polar residues) spans 471–485 (SRSSEPGKLKTNSQP). The disordered stretch occupies residues 471–524 (SRSSEPGKLKTNSQPFKLDPKSAHRKLKVSHDNLTVERDESSSKKSHTPERFTS). Positions 482–659 (NSQPFKLDPK…IITGLPIPDH (178 aa)) constitute a B30.2/SPRY domain. Residues 499-520 (VSHDNLTVERDESSSKKSHTPE) show a composition bias toward basic and acidic residues. Ser-511 carries the phosphoserine modification.

Belongs to the TRIM/RBCC family. Homodimer or heterodimer with MID2. Interacts with IGBP1. Interacts with TRIM16. Phosphorylated on serine and threonine residues. In the fetus, highest expression found in kidney, followed by brain and lung. Expressed at low levels in fetal liver. In the adult, most abundant in heart, placenta and brain.

The protein localises to the cytoplasm. It localises to the cytoskeleton. Its subcellular location is the spindle. The catalysed reaction is S-ubiquitinyl-[E2 ubiquitin-conjugating enzyme]-L-cysteine + [acceptor protein]-L-lysine = [E2 ubiquitin-conjugating enzyme]-L-cysteine + N(6)-ubiquitinyl-[acceptor protein]-L-lysine.. Functionally, has E3 ubiquitin ligase activity towards IGBP1, promoting its monoubiquitination, which results in deprotection of the catalytic subunit of protein phosphatase PP2A, and its subsequent degradation by polyubiquitination. In Homo sapiens (Human), this protein is E3 ubiquitin-protein ligase Midline-1 (MID1).